Reading from the N-terminus, the 2588-residue chain is uncharacterized protein (2588 aa).

Basic and acidic residues predominate over residues 1–11; that stretch reads MSFKNNEKYMD. 9 disordered regions span residues 1-56, 442-598, 774-801, 1303-1357, 1631-1662, 1685-1705, 1820-1856, 2317-2342, and 2415-2437; these read MSFK…NISN, ELES…HFSN, KKEK…NNNI, DSHD…KKKY, QNSN…HHQN, NNNN…KDQP, KLNV…EEND, KKKK…DNIN, and YDNN…NSHT. The segment covering 42–56 has biased composition (low complexity); the sequence is NNNNNNNNNNSNISN. Positions 413 to 452 form a coiled coil; the sequence is YREIEENEKVMEMQRRENELLEEKKRLKQELESYHDDSST. A compositionally biased stretch (acidic residues) spans 451–462; it reads STDDDSSADEQQ. Basic and acidic residues-rich tracts occupy residues 463 to 515 and 522 to 588; these read DERR…KNDD and DHTH…DHTH. Residues 785–801 show a composition bias toward low complexity; sequence DNNNNNNNNNNNDNNNI. Residues 1308 to 1318 show a composition bias toward acidic residues; the sequence is NNDDSVNDSND. The segment covering 1319 to 1331 has biased composition (low complexity); sequence DTNNVNVNVNVND. Over residues 1347-1356 the composition is skewed to basic residues; that stretch reads DKKKKHKKKK. A compositionally biased stretch (polar residues) spans 1631 to 1643; sequence QNSNNKSNDSLKM. Over residues 1685 to 1698 the composition is skewed to low complexity; sequence NNNNNNNNNNNNND. Positions 1828 to 1838 are enriched in basic and acidic residues; the sequence is QGERQDERNID. Positions 1839-1856 are enriched in acidic residues; it reads HEDEPVSSNTEDDHEEND. Over residues 2416-2434 the composition is skewed to low complexity; the sequence is DNNNNNDNNNDNNNDNNNN.

This is an uncharacterized protein from Plasmodium falciparum (isolate 3D7).